Reading from the N-terminus, the 54-residue chain is MKGIKCLSITCFLSDNSIIRVVLIRRMLKILLFSLLVLIILCFIDPILFYFICL.

A helical membrane pass occupies residues 32–52 (LFSLLVLIILCFIDPILFYFI).

It is found in the host membrane. This is an uncharacterized protein from Cassava vein mosaic virus (CsVMV).